Consider the following 900-residue polypeptide: Vacuolar membrane protein pep3 (900 aa).

The disordered stretch occupies residues 1–20 (MSLAEDWIDPNSSEDSDIQE). TPR repeat units lie at residues 314-345 (HLAF…SPHE), 373-406 (NNET…NTVL), 408-436 (GYAE…VEEV), and 546-579 (MKDQ…ETLI). One copy of the CHCR repeat lies at 602–756 (DLDVHALIPS…MFSKKSGIKE (155 aa)). The RING-type; atypical zinc-finger motif lies at 837 to 884 (CWHCNQPLFSEPFVLFPCQHAFHRSCMLEKTYKLASEKNILKECQLCG).

The protein belongs to the VPS18 family.

The protein resides in the vacuole membrane. Functionally, required for vacuolar biogenesis. The protein is Vacuolar membrane protein pep3 (pep3) of Schizosaccharomyces pombe (strain 972 / ATCC 24843) (Fission yeast).